A 300-amino-acid chain; its full sequence is NADH-cytochrome b5 reductase 2 (300 aa).

The chain crosses the membrane as a helical span at residues F12 to Y29. Residues D49–E153 form the FAD-binding FR-type domain. Q156–L191 is an FAD binding site.

It belongs to the flavoprotein pyridine nucleotide cytochrome reductase family. FAD serves as cofactor.

The protein localises to the mitochondrion outer membrane. It carries out the reaction 2 Fe(III)-[cytochrome b5] + NADH = 2 Fe(II)-[cytochrome b5] + NAD(+) + H(+). Its function is as follows. May mediate the reduction of outer membrane cytochrome b5. The chain is NADH-cytochrome b5 reductase 2 (MCR1) from Lodderomyces elongisporus (strain ATCC 11503 / CBS 2605 / JCM 1781 / NBRC 1676 / NRRL YB-4239) (Yeast).